Reading from the N-terminus, the 1486-residue chain is Phosphatidylinositol 3-kinase C2 domain-containing subunit gamma (1486 aa).

Residues 285-371 (KTKFNIHIFI…IQLHLQKSRE (87 aa)) form the PI3K-RBD domain. One can recognise a C2 PI3K-type domain in the interval 521–669 (LPSHLSFTVY…SPVTLQIDFP (149 aa)). A PIK helical domain is found at 684 to 860 (RSNLEEPLKE…QKLLAALQFC (177 aa)). The PI3K/PI4K catalytic domain maps to 929 to 1207 (DHDACSYFTS…KIKESLECFP (279 aa)). The segment at 935–941 (YFTSNAL) is G-loop. Residues 1071 to 1079 (GVCDRHNDN) form a catalytic loop region. Residues 1090-1116 (HIDFGKFLGHAQTFGGIKRDRAPFIFT) are activation loop. The 113-residue stretch at 1240–1352 (LSTTRSIERA…SFFLSEAVQQ (113 aa)) folds into the PX domain. The 118-residue stretch at 1369-1486 (KKPKVQLVIS…KWYPLGNSII (118 aa)) folds into the C2 domain.

This sequence belongs to the PI3/PI4-kinase family. In terms of tissue distribution, highly expressed in liver, prostate and testis. Lower levels in small intestine, kidney and pancreas.

Its subcellular location is the membrane. It catalyses the reaction a 1,2-diacyl-sn-glycero-3-phospho-(1D-myo-inositol 4-phosphate) + ATP = a 1,2-diacyl-sn-glycero-3-phospho-(1D-myo-inositol-3,4-bisphosphate) + ADP + H(+). The enzyme catalyses a 1,2-diacyl-sn-glycero-3-phospho-(1D-myo-inositol) + ATP = a 1,2-diacyl-sn-glycero-3-phospho-(1D-myo-inositol-3-phosphate) + ADP + H(+). In terms of biological role, generates phosphatidylinositol 3-phosphate (PtdIns3P) and phosphatidylinositol 3,4-bisphosphate (PtdIns(3,4)P2) that act as second messengers. May play a role in SDF1A-stimulated chemotaxis. This is Phosphatidylinositol 3-kinase C2 domain-containing subunit gamma (PIK3C2G) from Homo sapiens (Human).